Consider the following 90-residue polypeptide: Glycine and tyrosine-rich protein (90 aa).

A signal peptide spans Met1–Ala21.

Prismatic layer of shell (at protein level).

The protein localises to the secreted. This is Glycine and tyrosine-rich protein from Pinctada maxima (Silver-lipped pearl oyster).